Consider the following 290-residue polypeptide: Ribosomal protein L11 methyltransferase (290 aa).

Positions 136, 159, 181, and 228 each coordinate S-adenosyl-L-methionine.

Belongs to the methyltransferase superfamily. PrmA family.

It localises to the cytoplasm. It catalyses the reaction L-lysyl-[protein] + 3 S-adenosyl-L-methionine = N(6),N(6),N(6)-trimethyl-L-lysyl-[protein] + 3 S-adenosyl-L-homocysteine + 3 H(+). Its function is as follows. Methylates ribosomal protein L11. The sequence is that of Ribosomal protein L11 methyltransferase from Allorhizobium ampelinum (strain ATCC BAA-846 / DSM 112012 / S4) (Agrobacterium vitis (strain S4)).